We begin with the raw amino-acid sequence, 581 residues long: DNA primase (581 aa).

The segment at 40 to 64 (CPFHNEKTPSFTVNGEKQFYHCFGC) adopts a CHC2-type zinc-finger fold. Residues 259-341 (NRLLVVEGYM…GRQLRFMFLP (83 aa)) enclose the Toprim domain. The Mg(2+) site is built by E265, D309, and D311.

Belongs to the DnaG primase family. Monomer. Interacts with DnaB. Requires Zn(2+) as cofactor. It depends on Mg(2+) as a cofactor.

The enzyme catalyses ssDNA + n NTP = ssDNA/pppN(pN)n-1 hybrid + (n-1) diphosphate.. Its function is as follows. RNA polymerase that catalyzes the synthesis of short RNA molecules used as primers for DNA polymerase during DNA replication. The protein is DNA primase of Shigella flexneri.